The following is a 753-amino-acid chain: Striatin-4 (753 aa).

A disordered region spans residues 10–65; sequence VAAAASSCRPLGSGAGPGPTGAAPVSAPAPGPGPAGKGGGGGGSPGPTAGPEPLSL. A compositionally biased stretch (gly residues) spans 43–54; the sequence is PAGKGGGGGGSP. A Phosphoserine modification is found at S53. Positions 69–136 form a coiled coil; it reads LHFIQHEWAR…QERAKYHKLK (68 aa). The tract at residues 71-79 is caveolin-binding; sequence FIQHEWARF. The interval 165 to 182 is calmodulin-binding; the sequence is ENSPLVWKEGRQLLRQYL. Phosphoserine is present on S206. Disordered stretches follow at residues 213–232, 271–345, and 363–382; these read VEPS…LSGG, CEDE…SPHE, and VDGL…QPRP. 2 stretches are compositionally biased toward acidic residues: residues 271–283 and 302–317; these read CEDE…DELD and EMED…DAIN. S276 is subject to Phosphoserine. Over residues 332-345 the composition is skewed to basic and acidic residues; it reads PDPRRCTVDGSPHE. Pro residues predominate over residues 370–380; that stretch reads VTGPPPGTPQP. 7 WD repeats span residues 436-475, 489-528, 542-581, 587-628, 635-674, 677-716, and 723-753; these read SHYD…TAKK, AHRG…MDPY, GHGD…PACL, ASEH…ALLT, SGPT…PVHS, AHLD…CVQE, and KHEE…KVFV.

Belongs to the WD repeat striatin family. As to quaternary structure, part of the core of STRIPAK complexes composed of PP2A catalytic and scaffolding subunits, the striatins (PP2A regulatory subunits), the striatin-associated proteins MOB4, STRIP1 and STRIP2, PDCD10 and members of the STE20 kinases, such as STK24 and STK26. Interacts with CTTNBP2NL.

It is found in the cytoplasm. In terms of biological role, calmodulin-binding scaffolding protein which is the center of the striatin-interacting phosphatase and kinase (STRIPAK) complexes. STRIPAK complexes have critical roles in protein (de)phosphorylation and are regulators of multiple signaling pathways including Hippo, MAPK, nuclear receptor and cytoskeleton remodeling. Different types of STRIPAK complexes are involved in a variety of biological processes such as cell growth, differentiation, apoptosis, metabolism and immune regulation. Key regulator of the expanded Hippo signaling pathway by interacting and allowing the inhibition of MAP4K kinases by the STRIPAK complex. This Homo sapiens (Human) protein is Striatin-4.